Reading from the N-terminus, the 642-residue chain is Serotransferrin (642 aa).

2 consecutive Transferrin-like domains span residues Gly1 to Lys280 and Ile290 to Gln621. Fe(3+) contacts are provided by Asp25 and Tyr54. 3 disulfide bridges follow: Cys77/Cys158, Cys121/Cys137, and Cys186/Cys200. 4 residues coordinate hydrogencarbonate: Thr79, Lys83, Ala85, and Gly86. Tyr152 lines the Fe(3+) pocket. His208 contributes to the Fe(3+) binding site. 2 disulfides stabilise this stretch: Cys293/Cys329 and Cys303/Cys320. Residue Asp344 coordinates Fe(3+). 7 disulfides stabilise this stretch: Cys354/Cys633, Cys369/Cys594, Cys402/Cys480, Cys426/Cys622, Cys436/Cys450, Cys447/Cys463, and Cys520/Cys535. Asn365 carries N-linked (GlcNAc...) asparagine glycosylation. Tyr379 is a binding site for Fe(3+). Hydrogencarbonate is bound by residues Thr404, Arg408, Ala410, and Gly411. A Fe(3+)-binding site is contributed by Tyr474. His543 contributes to the Fe(3+) binding site.

Belongs to the transferrin family. In terms of assembly, monomer. In terms of tissue distribution, brain and liver; to a lesser extent in kidney and heart.

It is found in the secreted. Its function is as follows. Transferrins are iron binding transport proteins which can bind two Fe(3+) ions in association with the binding of an anion, usually bicarbonate. In Gadus morhua (Atlantic cod), this protein is Serotransferrin (tf).